Consider the following 633-residue polypeptide: Laccase ARB_05828 (633 aa).

Residues 1–16 form the signal peptide; sequence MKRLGLAALYIGSALA. A propeptide spanning residues 22-47 is cleaved from the precursor; the sequence is GPPSRNVPRDDFPMFNPLPSTDLNTR. Asparagine 143 carries N-linked (GlcNAc...) asparagine glycosylation. Cu cation is bound by residues histidine 148, histidine 150, histidine 192, and histidine 194. Cysteine 169 and cysteine 607 form a disulfide bridge. In terms of domain architecture, Plastocyanin-like spans 224–353; the sequence is LLMTDHLHSS…GRYWVRTTPA (130 aa). Asparagine 286 and asparagine 456 each carry an N-linked (GlcNAc...) asparagine glycan. Histidine 508, histidine 511, histidine 513, histidine 568, cysteine 569, histidine 570, and histidine 574 together coordinate Cu cation.

Belongs to the multicopper oxidase family. Monomer. Cu cation serves as cofactor.

Its subcellular location is the secreted. The catalysed reaction is 4 hydroquinone + O2 = 4 benzosemiquinone + 2 H2O. The protein is Laccase ARB_05828 of Arthroderma benhamiae (strain ATCC MYA-4681 / CBS 112371) (Trichophyton mentagrophytes).